The chain runs to 637 residues: Nuclear receptor subfamily 2 group C member 1-A (637 aa).

The segment at residues 149-224 is a DNA-binding region (nuclear receptor); the sequence is VELCVVCGDK…LGMKQDSVQC (76 aa). NR C4-type zinc fingers lie at residues 152–172 and 188–207; these read CVVCGDKASGRHYGAVTCEGC and CRGSKDCVINKHYRNRCQYC. In terms of domain architecture, NR LBD spans 383 to 624; the sequence is CLGSNANLLH…SIIPYILRME (242 aa).

It belongs to the nuclear hormone receptor family. NR2 subfamily.

Its subcellular location is the nucleus. Functionally, orphan nuclear receptor. Binds the IR7 element in the promoter of its own gene in an autoregulatory negative feedback mechanism. Primarily repressor of a broad range of genes. Binds to hormone response elements (HREs) consisting of two 5'-AGGTCA-3' half site direct repeat consensus sequences. This Xenopus laevis (African clawed frog) protein is Nuclear receptor subfamily 2 group C member 1-A (nr2c1-a).